A 238-amino-acid chain; its full sequence is Probable 2-phosphosulfolactate phosphatase (238 aa).

Belongs to the ComB family. The cofactor is Mg(2+).

The catalysed reaction is (2R)-O-phospho-3-sulfolactate + H2O = (2R)-3-sulfolactate + phosphate. The chain is Probable 2-phosphosulfolactate phosphatase from Clostridium botulinum (strain Eklund 17B / Type B).